The following is a 130-amino-acid chain: Ornithine decarboxylase antizyme (130 aa).

The span at 1-14 (SDVPVHHRTDHDRA) shows a compositional bias: basic and acidic residues. Residues 1 to 56 (SDVPVHHRTDHDRASLLTGSSRKSSVDSAGGSLFEASSRASSPSSSSSSECSDTES) are disordered. The span at 17 to 27 (LTGSSRKSSVD) shows a compositional bias: polar residues. The segment covering 32 to 51 (SLFEASSRASSPSSSSSSEC) has biased composition (low complexity).

It belongs to the ODC antizyme family. Interacts with ODC1 and thereby sterically blocks ODC homodimerization.

Functionally, ornithine decarboxylase (ODC) antizyme protein that negatively regulates ODC activity and intracellular polyamine biosynthesis and uptake in response to increased intracellular polyamine levels. Binds to ODC monomers, inhibiting the assembly of the functional ODC homodimer, and targets the monomers for ubiquitin-independent proteolytic destruction by the 26S proteasome. In Drosophila virilis (Fruit fly), this protein is Ornithine decarboxylase antizyme (Oda).